Consider the following 296-residue polypeptide: NAD kinase (296 aa).

Catalysis depends on D73, which acts as the Proton acceptor. Residues 73–74, K78, 151–152, R178, D180, and 191–196 contribute to the NAD(+) site; these read DG, NE, and TAHAMS.

The protein belongs to the NAD kinase family. It depends on a divalent metal cation as a cofactor.

It localises to the cytoplasm. The enzyme catalyses NAD(+) + ATP = ADP + NADP(+) + H(+). Involved in the regulation of the intracellular balance of NAD and NADP, and is a key enzyme in the biosynthesis of NADP. Catalyzes specifically the phosphorylation on 2'-hydroxyl of the adenosine moiety of NAD to yield NADP. This is NAD kinase from Francisella tularensis subsp. tularensis (strain FSC 198).